The primary structure comprises 554 residues: Undecaprenyl phosphate-alpha-4-amino-4-deoxy-L-arabinose arabinosyl transferase (554 aa).

The next 11 membrane-spanning stretches (helical) occupy residues 4 to 24 (LKDSGAALLALFFVLVYLLPV), 87 to 107 (FGSIFSTALSAVLVYWLATLL), 115 to 135 (VLATLIYLSFLLVFGIGTYAV), 178 to 198 (FMTKGFLALAVPVIAVLPIVI), 206 to 226 (LVVFGPIAIVCAVLLSLPWAL), 262 to 282 (YLPILCIGVLPWLGLLPGALF), 293 to 313 (ELFFLLSWVVMPLLFFSVAKG), 315 to 335 (LPTYILPCMAPLSLLMAAYAT), 351 to 371 (VINLLFGVACALVIVVIGLGL), 384 to 404 (QKVWLGVLAFAGWGVTGFITL), and 414 to 434 (AAACPLLFILLVGYLIPQQVV).

It belongs to the glycosyltransferase 83 family.

The protein resides in the cell inner membrane. It carries out the reaction 4-amino-4-deoxy-alpha-L-arabinopyranosyl di-trans,octa-cis-undecaprenyl phosphate + lipid IVA = lipid IIA + di-trans,octa-cis-undecaprenyl phosphate.. It participates in lipopolysaccharide metabolism; 4-amino-4-deoxy-beta-L-arabinose-lipid A biosynthesis. In terms of biological role, catalyzes the transfer of the L-Ara4N moiety of the glycolipid undecaprenyl phosphate-alpha-L-Ara4N to lipid A. The modified arabinose is attached to lipid A and is required for resistance to polymyxin and cationic antimicrobial peptides. This chain is Undecaprenyl phosphate-alpha-4-amino-4-deoxy-L-arabinose arabinosyl transferase, found in Yersinia pseudotuberculosis serotype O:1b (strain IP 31758).